A 305-amino-acid polypeptide reads, in one-letter code: Serine/threonine-protein phosphatase PP-X isozyme 1 (305 aa).

Mn(2+)-binding residues include D51, H53, D79, and N111. The active-site Proton donor is H112. Mn(2+) contacts are provided by H161 and H236.

It belongs to the PPP phosphatase family. PP-4 (PP-X) subfamily. Interacts with TAP46. Mn(2+) is required as a cofactor. As to expression, ubiquitous, mostly expressed in root mersitems, flowers, and vascular tissues.

It localises to the plastid stroma. The catalysed reaction is O-phospho-L-seryl-[protein] + H2O = L-seryl-[protein] + phosphate. The enzyme catalyses O-phospho-L-threonyl-[protein] + H2O = L-threonyl-[protein] + phosphate. The protein is Serine/threonine-protein phosphatase PP-X isozyme 1 (PPX1) of Arabidopsis thaliana (Mouse-ear cress).